A 491-amino-acid chain; its full sequence is Diacylglycerol O-acyltransferase 1 (491 aa).

Residues 1-60 (MGDRGGAGGTRRRRTGSRPSSHGGGGPAAAEEEVRDAAAGPDMGAAGDAPAPAPSKDADD) are disordered. Residues 1-86 (MGDRGGAGGT…SLFSSDSGFN (86 aa)) are Cytoplasmic-facing. The involved in homomerization stretch occupies residues 1 to 94 (MGDRGGAGGT…FNNYRGILNW (94 aa)). Residues Ser-20 and Ser-21 each carry the phosphoserine modification. The span at 37-50 (AAAGPDMGAAGDAP) shows a compositional bias: low complexity. The chain crosses the membrane as a helical span at residues 87-121 (NYRGILNWCVVMLILSNARLFLENLIKYGILVDPI). The Lumenal portion of the chain corresponds to 122 to 133 (QVVSLFLKDPYS). An extracellular loop 1 (EL1) region spans residues 122–133 (QVVSLFLKDPYS). A helical transmembrane segment spans residues 134 to 159 (WPAPCLVIAANVFAVAAFQVEKRLAV). Residues 134-491 (WPAPCLVIAA…LNYEAPVAGA (358 aa)) form an MBOAT fold region. Residues 160 to 164 (GALTE) lie on the Cytoplasmic side of the membrane. Residues 165-187 (QAGLLLHVANLATILCFPAAVVL) traverse the membrane as a helical segment. Residues 188–194 (LVESITP) lie on the Lumenal side of the membrane. A helical membrane pass occupies residues 195–226 (VGSLLALMVHTILFLKLFSYRDVNLWCRRARA). Over 227-276 (KAASAGKRASSAAAPHTVSYPDNLTYRDLYYFLFAPTLCYELNFPRSPRI) the chain is Cytoplasmic. The interval 227–279 (KAASAGKRASSAAAPHTVSYPDNLTYRDLYYFLFAPTLCYELNFPRSPRIRKR) is intracellular loop 1 (IL1). Residues 277-311 (RKRFLLRRILEMLFFTQLQVGLIQQWMVPTIQNSM) form a helical membrane-spanning segment. The Lumenal segment spans residues 312–318 (KPFKDMD). Residues 319–356 (YSRIIERLLKLAVPNHLIWLIFFYWLFHSCLNAVAELM) form a helical membrane-spanning segment. Over 357–402 (QFGDREFYRDWWNSESVTYFWQNWNIPVHKWCIRHFYKPMLRRGSS) the chain is Cytoplasmic. Positions 357–402 (QFGDREFYRDWWNSESVTYFWQNWNIPVHKWCIRHFYKPMLRRGSS) are intracellular loop 2 (IL2). Residues 363–369 (FYRDWWN) carry the FYXDWWN motif motif. Residues 377–385 (WQNWNIPVH), Tyr-393, and Arg-407 each bind an acyl-CoA. An amphipathic helix (AH) region spans residues 383 to 397 (PVHKWCIRHFYKPML). A helical membrane pass occupies residues 403 to 423 (RWMARIGVFLASAFFHEYLVS). His-418 is an active-site residue. Residues 424 to 431 (VPLRMFRL) lie on the Lumenal side of the membrane. A helical transmembrane segment spans residues 432–450 (WAFTGMMAQIPLAWFVGRF). Over 451 to 452 (FQ) the chain is Cytoplasmic. Residues 453–484 (GNYGNAAVWLTLIIGQPIAVLMYVHDYYVLNY) traverse the membrane as a helical segment. Tyr-480 is an an acyl-CoA binding site. Residues 485 to 491 (EAPVAGA) lie on the Lumenal side of the membrane.

Belongs to the membrane-bound acyltransferase family. Sterol o-acyltransferase subfamily. In terms of assembly, homodimer or homotetramer; both forms have similar enzymatic activities.

The protein resides in the endoplasmic reticulum membrane. The enzyme catalyses an acyl-CoA + a 1,2-diacyl-sn-glycerol = a triacyl-sn-glycerol + CoA. The catalysed reaction is all-trans-retinol + an acyl-CoA = an all-trans-retinyl ester + CoA. It catalyses the reaction 2-(9Z-octadecenoyl)-glycerol + (9Z)-octadecenoyl-CoA = 1,2-di-(9Z-octadecenoyl)-sn-glycerol + CoA. It carries out the reaction 1,2-di-(9Z-octadecenoyl)-sn-glycerol + (9Z)-octadecenoyl-CoA = 1,2,3-tri-(9Z-octadecenoyl)-glycerol + CoA. The enzyme catalyses all-trans-retinol + hexadecanoyl-CoA = all-trans-retinyl hexadecanoate + CoA. The catalysed reaction is 1-O-(9Z-octadecenyl)-glycerol + (9Z)-octadecenoyl-CoA = 1-O-(9Z-octadecyl)-3-(9Z-octadecenoyl)-glycerol + CoA. It catalyses the reaction 1-O-(9Z-octadecyl)-3-(9Z-octadecenoyl)-glycerol + (9Z)-octadecenoyl-CoA = 1-O-(9Z-octadecenyl)-2,3-di-(9Z-octadecenoyl)glycerol + CoA. It carries out the reaction 1-(9Z-octadecenoyl)-glycerol + (9Z)-octadecenoyl-CoA = 1,2-di-(9Z-octadecenoyl)-glycerol + CoA. The enzyme catalyses 1,2-di-(9Z-octadecenoyl)-glycerol + (9Z)-octadecenoate + H(+) = 1,2,3-tri-(9Z-octadecenoyl)-glycerol + H2O. The catalysed reaction is 1-octadecanoyl-2-(5Z,8Z,11Z,14Z-eicosatetraenoyl)-sn-glycerol + (9Z)-octadecenoyl-CoA = 1-octadecanoyl-2-(5Z,8Z,11Z,14Z)-eicosatetraenoyl-3-(9Z)-octadecenoyl-sn-glycerol + CoA. It catalyses the reaction hexadecane-1,2-diol + 2 hexadecanoyl-CoA = 1,2-O,O-dihexadecanoyl-1,2-hexadecanediol + 2 CoA. It carries out the reaction hexadecane-1,2-diol + hexadecanoyl-CoA = 2-hydroxyhexadecyl hexadecanoate + CoA. The enzyme catalyses 2-(9Z-octadecenoyl)-glycerol + hexadecanoyl-CoA = 1-hexadecanoyl-2-(9Z-octadecenoyl)-sn-glycerol + CoA. The catalysed reaction is 1,2-di-(9Z-octadecenoyl)-sn-glycerol + hexadecanoyl-CoA = 1,2-di-(9Z)-octadecenoyl-3-hexadecanoyl-sn-glycerol + CoA. It catalyses the reaction hexadecan-1-ol + hexadecanoyl-CoA = hexadecanyl hexadecanoate + CoA. It carries out the reaction 13-cis-retinol + hexadecanoyl-CoA = 13-cis-retinyl hexadecanoate + CoA. The enzyme catalyses 1,3-di-(9Z-octadecenoyl)-glycerol + (9Z)-octadecenoyl-CoA = 1,2,3-tri-(9Z-octadecenoyl)-glycerol + CoA. The catalysed reaction is 2,3-di-(9Z)-octadecenoyl-sn-glycerol + (9Z)-octadecenoyl-CoA = 1,2,3-tri-(9Z-octadecenoyl)-glycerol + CoA. It functions in the pathway lipid metabolism; glycerolipid metabolism. Functionally, catalyzes the terminal and only committed step in triacylglycerol synthesis by using diacylglycerol and fatty acyl CoA as substrates. Highly expressed in epithelial cells of the small intestine and its activity is essential for the absorption of dietary fats. In liver, plays a role in esterifying exogenous fatty acids to glycerol, and is required to synthesize fat for storage. Also present in female mammary glands, where it produces fat in the milk. May be involved in VLDL (very low density lipoprotein) assembly. In contrast to DGAT2 it is not essential for survival. Functions as the major acyl-CoA retinol acyltransferase (ARAT) in the skin, where it acts to maintain retinoid homeostasis and prevent retinoid toxicity leading to skin and hair disorders. Exhibits additional acyltransferase activities, includin acyl CoA:monoacylglycerol acyltransferase (MGAT), wax monoester and wax diester synthases. Also able to use 1-monoalkylglycerol (1-MAkG) as an acyl acceptor for the synthesis of monoalkyl-monoacylglycerol (MAMAG). The chain is Diacylglycerol O-acyltransferase 1 (DGAT1) from Chlorocebus aethiops (Green monkey).